We begin with the raw amino-acid sequence, 188 residues long: MRKSKRERQELLQQTIRTTPFITDEELAEKFNVSIQTIRLDRLELSIPELRERIKSVAEKSLEDEVKSLPLDEVIGEIIDLELDEHAISILEIRREHVFSRNQIARGHHLFAQANSLAVALIDDELALTAKADIRFTRQVKQGERVVAKAKVVKLDKDKGRTVVEVNSYVAEEPVFSGEFVMYRSKQS.

This sequence belongs to the FapR family.

Functionally, transcriptional factor involved in regulation of membrane lipid biosynthesis by repressing genes involved in fatty acid and phospholipid metabolism. The protein is Transcription factor FapR of Bacillus licheniformis (strain ATCC 14580 / DSM 13 / JCM 2505 / CCUG 7422 / NBRC 12200 / NCIMB 9375 / NCTC 10341 / NRRL NRS-1264 / Gibson 46).